A 427-amino-acid polypeptide reads, in one-letter code: UDP-N-acetyl-D-mannosamine dehydrogenase (427 aa).

6 residues coordinate NAD(+): tyrosine 19, isoleucine 20, aspartate 39, arginine 44, threonine 91, and threonine 130. Residues arginine 155, valine 156, lysine 207, asparagine 211, arginine 214, histidine 245, arginine 247, and glycine 258 each coordinate UDP-N-acetyl-alpha-D-mannosaminouronate. Lysine 207 functions as the Proton donor/acceptor in the catalytic mechanism. Cysteine 261 functions as the Nucleophile in the catalytic mechanism. Tyrosine 318 and lysine 319 together coordinate UDP-N-acetyl-alpha-D-mannosaminouronate. Arginine 326 provides a ligand contact to NAD(+). UDP-N-acetyl-alpha-D-mannosaminouronate is bound at residue lysine 404.

The protein belongs to the UDP-glucose/GDP-mannose dehydrogenase family. In terms of assembly, homotetramer; probably dimer of dimers.

The enzyme catalyses UDP-N-acetyl-alpha-D-mannosamine + 2 NAD(+) + H2O = UDP-N-acetyl-alpha-D-mannosaminouronate + 2 NADH + 3 H(+). In terms of biological role, catalyzes the four-electron oxidation of UDP-N-acetyl-D-mannosamine (UDP-ManNAc), reducing NAD(+) and releasing UDP-N-acetylmannosaminuronic acid (UDP-ManNAcA). This is UDP-N-acetyl-D-mannosamine dehydrogenase (wecC) from Methanococcus maripaludis (strain C7 / ATCC BAA-1331).